Consider the following 431-residue polypeptide: Histidinol dehydrogenase (431 aa).

3 residues coordinate NAD(+): Y130, Q191, and N214. S237, Q259, and H262 together coordinate substrate. Q259 and H262 together coordinate Zn(2+). Active-site proton acceptor residues include E327 and H328. Positions 328, 361, 415, and 420 each coordinate substrate. D361 provides a ligand contact to Zn(2+). H420 is a Zn(2+) binding site.

Belongs to the histidinol dehydrogenase family. Zn(2+) serves as cofactor.

It catalyses the reaction L-histidinol + 2 NAD(+) + H2O = L-histidine + 2 NADH + 3 H(+). The protein operates within amino-acid biosynthesis; L-histidine biosynthesis; L-histidine from 5-phospho-alpha-D-ribose 1-diphosphate: step 9/9. Its function is as follows. Catalyzes the sequential NAD-dependent oxidations of L-histidinol to L-histidinaldehyde and then to L-histidine. This Syntrophotalea carbinolica (strain DSM 2380 / NBRC 103641 / GraBd1) (Pelobacter carbinolicus) protein is Histidinol dehydrogenase.